The sequence spans 100 residues: Probable antitoxin MazE4 (100 aa).

The tract at residues 77 to 100 (PYESEAERSAARARRNARQQRSAQ) is disordered.

In terms of assembly, forms a complex with cognate toxin MazF4.

Functionally, antitoxin component of a type II toxin-antitoxin (TA) system. Labile antitoxin that binds to cognate MazF4 toxin and counteracts its endoribonuclease activity. The chain is Probable antitoxin MazE4 (mazE4) from Mycobacterium tuberculosis (strain CDC 1551 / Oshkosh).